Reading from the N-terminus, the 352-residue chain is Proton-activated chloride channel (352 aa).

The disordered stretch occupies residues 1–55; that stretch reads MEAIRKELSRSYQELNEEAEPVAIDPEEAEDEEKEQEEAASAVAPDRDSDRSSPP. Residues 1–65 lie on the Cytoplasmic side of the membrane; it reads MEAIRKELSR…VRFSRTCLKN (65 aa). The segment covering 15–38 has biased composition (acidic residues); the sequence is LNEEAEPVAIDPEEAEDEEKEQEE. A helical transmembrane segment spans residues 66–86; sequence FFSVLLILVYLLLMGVAVFLV. The Extracellular portion of the chain corresponds to 87 to 299; the sequence is YQTITDFRDK…KDPYIQEIQD (213 aa). Residues 300 to 320 form a helical membrane-spanning segment; it reads IITANPWSMIALLCSVFLVLF. The Cytoplasmic portion of the chain corresponds to 321 to 352; sequence KAADFAKLSVKWMIKVRRRHLKKRARELNHIS.

This sequence belongs to the proton-activated chloride channel family.

The protein localises to the cell membrane. It catalyses the reaction chloride(in) = chloride(out). In terms of biological role, chloride channel gated by pH that facilitates the entry of chloride ions into cells upon exposure to extracellular acidic pH. The polypeptide is Proton-activated chloride channel (Xenopus tropicalis (Western clawed frog)).